The primary structure comprises 276 residues: Pantothenate synthetase (276 aa).

26 to 33 serves as a coordination point for ATP; sequence MGYLHEGH. H33 (proton donor) is an active-site residue. Q57 contributes to the (R)-pantoate binding site. Q57 is a binding site for beta-alanine. Residue 142–145 participates in ATP binding; it reads GLKD. Residue Q148 coordinates (R)-pantoate. Residues I171 and 179-182 each bind ATP; that span reads KSSR.

The protein belongs to the pantothenate synthetase family. As to quaternary structure, homodimer.

The protein localises to the cytoplasm. The catalysed reaction is (R)-pantoate + beta-alanine + ATP = (R)-pantothenate + AMP + diphosphate + H(+). The protein operates within cofactor biosynthesis; (R)-pantothenate biosynthesis; (R)-pantothenate from (R)-pantoate and beta-alanine: step 1/1. In terms of biological role, catalyzes the condensation of pantoate with beta-alanine in an ATP-dependent reaction via a pantoyl-adenylate intermediate. In Exiguobacterium sp. (strain ATCC BAA-1283 / AT1b), this protein is Pantothenate synthetase.